The sequence spans 1047 residues: Carbamoyl phosphate synthase arginine-specific large chain (1047 aa).

The segment at 1–401 (MPKRTDIQSV…GLQKAVRSLE (401 aa)) is carboxyphosphate synthetic domain. Positions 129, 169, 175, 176, 208, 210, 215, 241, 242, 243, 284, and 298 each coordinate ATP. The ATP-grasp 1 domain occupies 133 to 327 (RQLMHELHEP…IARMAAKLSL (195 aa)). Mg(2+) contacts are provided by Q284, E298, and N300. Q284, E298, and N300 together coordinate Mn(2+). The segment at 402 to 549 (IKTHGLSLPS…YSSWTGENDL (148 aa)) is oligomerization domain. The tract at residues 550 to 933 (LLPEKAKERV…AFRKAFAWGE (384 aa)) is carbamoyl phosphate synthetic domain. The ATP-grasp 2 domain occupies 676 to 865 (YEFMRSVEVP…LITYTIDVLF (190 aa)). The ATP site is built by R712, A750, E756, G781, V782, H783, S784, Q824, and E836. The Mg(2+) site is built by Q824, E836, and N838. Positions 824, 836, and 838 each coordinate Mn(2+). Residues 934–1047 (EQTPALFRKK…PFLLPDVVMN (114 aa)) form an allosteric domain region. The MGS-like domain maps to 937–1047 (PALFRKKGSV…PFLLPDVVMN (111 aa)).

This sequence belongs to the CarB family. Composed of two chains; the small (or glutamine) chain promotes the hydrolysis of glutamine to ammonia, which is used by the large (or ammonia) chain to synthesize carbamoyl phosphate. Tetramer of heterodimers (alpha,beta)4. It depends on Mg(2+) as a cofactor. The cofactor is Mn(2+).

It carries out the reaction hydrogencarbonate + L-glutamine + 2 ATP + H2O = carbamoyl phosphate + L-glutamate + 2 ADP + phosphate + 2 H(+). It catalyses the reaction hydrogencarbonate + NH4(+) + 2 ATP = carbamoyl phosphate + 2 ADP + phosphate + 2 H(+). Its pathway is amino-acid biosynthesis; L-arginine biosynthesis; carbamoyl phosphate from bicarbonate: step 1/1. Functionally, large subunit of the glutamine-dependent carbamoyl phosphate synthetase (CPSase). CPSase catalyzes the formation of carbamoyl phosphate from the ammonia moiety of glutamine, carbonate, and phosphate donated by ATP, constituting the first step of the biosynthetic pathway leading to arginine and/or urea. The large subunit (synthetase) binds the substrates ammonia (free or transferred from glutamine from the small subunit), hydrogencarbonate and ATP and carries out an ATP-coupled ligase reaction, activating hydrogencarbonate by forming carboxy phosphate which reacts with ammonia to form carbamoyl phosphate. This Halalkalibacterium halodurans (strain ATCC BAA-125 / DSM 18197 / FERM 7344 / JCM 9153 / C-125) (Bacillus halodurans) protein is Carbamoyl phosphate synthase arginine-specific large chain.